Here is a 115-residue protein sequence, read N- to C-terminus: Parathyroid hormone (115 aa).

The first 25 residues, 1–25, serve as a signal peptide directing secretion; sequence MIPAKDMAKVMIVMLAICFLTKSDG. Positions 26–31 are excised as a propeptide; that stretch reads KSVKKR. The important for receptor binding stretch occupies residues 51–69; it reads RVEWLRKKLQDVHNFVALG. The segment at 73–115 is disordered; it reads APRDAGSQRPRKKEDNVLVESHEKSLGEADKADVNVLTKAKSQ. The segment covering 84-105 has biased composition (basic and acidic residues); that stretch reads KKEDNVLVESHEKSLGEADKAD.

Belongs to the parathyroid hormone family. Interacts with PTH1R (via N-terminal extracellular domain).

It localises to the secreted. Its function is as follows. Parathyroid hormone elevates calcium level by dissolving the salts in bone and preventing their renal excretion. Acts by binding to its receptor, PTH1R, activating G protein-coupled receptor signaling. Stimulates [1-14C]-2-deoxy-D-glucose (2DG) transport and glycogen synthesis in osteoblastic cells. This chain is Parathyroid hormone, found in Homo sapiens (Human).